The following is a 662-amino-acid chain: Transketolase (662 aa).

His28 is a binding site for substrate. Residues His68 and 115-117 (GPL) contribute to the thiamine diphosphate site. Residue Asp156 participates in Mg(2+) binding. Thiamine diphosphate contacts are provided by Gly157 and Asn186. 2 residues coordinate Mg(2+): Asn186 and Ile188. Residues His261, Arg356, and Ser383 each contribute to the substrate site. His261 provides a ligand contact to thiamine diphosphate. The Proton donor role is filled by Glu410. Position 436 (Phe436) interacts with thiamine diphosphate. Positions 460, 468, and 519 each coordinate substrate.

Belongs to the transketolase family. As to quaternary structure, homodimer. Mg(2+) is required as a cofactor. It depends on Ca(2+) as a cofactor. Requires Mn(2+) as cofactor. The cofactor is Co(2+). Thiamine diphosphate serves as cofactor.

It carries out the reaction D-sedoheptulose 7-phosphate + D-glyceraldehyde 3-phosphate = aldehydo-D-ribose 5-phosphate + D-xylulose 5-phosphate. The protein operates within carbohydrate biosynthesis; Calvin cycle. It participates in carbohydrate degradation; pentose phosphate pathway. Catalyzes the transfer of a two-carbon ketol group from a ketose donor to an aldose acceptor, via a covalent intermediate with the cofactor thiamine pyrophosphate. The polypeptide is Transketolase (tkt) (Staphylococcus aureus (strain COL)).